A 317-amino-acid chain; its full sequence is 4-hydroxy-3-methylbut-2-enyl diphosphate reductase (317 aa).

Residue Cys12 participates in [4Fe-4S] cluster binding. Positions 41 and 74 each coordinate (2E)-4-hydroxy-3-methylbut-2-enyl diphosphate. The dimethylallyl diphosphate site is built by His41 and His74. 2 residues coordinate isopentenyl diphosphate: His41 and His74. Cys97 contacts [4Fe-4S] cluster. His125 contacts (2E)-4-hydroxy-3-methylbut-2-enyl diphosphate. His125 is a dimethylallyl diphosphate binding site. His125 serves as a coordination point for isopentenyl diphosphate. The active-site Proton donor is the Glu127. Residue Thr168 coordinates (2E)-4-hydroxy-3-methylbut-2-enyl diphosphate. [4Fe-4S] cluster is bound at residue Cys198. (2E)-4-hydroxy-3-methylbut-2-enyl diphosphate contacts are provided by Ser226, Ser227, Asn228, and Ser270. Residues Ser226, Ser227, Asn228, and Ser270 each contribute to the dimethylallyl diphosphate site. The isopentenyl diphosphate site is built by Ser226, Ser227, Asn228, and Ser270.

The protein belongs to the IspH family. As to quaternary structure, homodimer. The cofactor is [4Fe-4S] cluster.

The enzyme catalyses isopentenyl diphosphate + 2 oxidized [2Fe-2S]-[ferredoxin] + H2O = (2E)-4-hydroxy-3-methylbut-2-enyl diphosphate + 2 reduced [2Fe-2S]-[ferredoxin] + 2 H(+). It catalyses the reaction dimethylallyl diphosphate + 2 oxidized [2Fe-2S]-[ferredoxin] + H2O = (2E)-4-hydroxy-3-methylbut-2-enyl diphosphate + 2 reduced [2Fe-2S]-[ferredoxin] + 2 H(+). The protein operates within isoprenoid biosynthesis; dimethylallyl diphosphate biosynthesis; dimethylallyl diphosphate from (2E)-4-hydroxy-3-methylbutenyl diphosphate: step 1/1. Its pathway is isoprenoid biosynthesis; isopentenyl diphosphate biosynthesis via DXP pathway; isopentenyl diphosphate from 1-deoxy-D-xylulose 5-phosphate: step 6/6. In terms of biological role, catalyzes the conversion of 1-hydroxy-2-methyl-2-(E)-butenyl 4-diphosphate (HMBPP) into a mixture of isopentenyl diphosphate (IPP) and dimethylallyl diphosphate (DMAPP). Acts in the terminal step of the DOXP/MEP pathway for isoprenoid precursor biosynthesis. This is 4-hydroxy-3-methylbut-2-enyl diphosphate reductase from Proteus mirabilis (strain HI4320).